Here is a 340-residue protein sequence, read N- to C-terminus: Thermopsin (340 aa).

The N-terminal stretch at 1–28 (MNFKSICLIILLSALIIPYIPQNIYFFP) is a signal peptide. Positions 29 to 41 (HRNTTGATISSGL) are excised as a propeptide. 10 N-linked (GlcNAc...) asparagine glycosylation sites follow: N31, N65, N85, N117, N148, N197, N277, N287, N327, and N334.

This sequence belongs to the peptidase A5 family.

The protein localises to the secreted. The enzyme catalyses Specificity similar to pepsin A, prefers bulky hydrophobic side-chains on either side of the scissible bond.. Functionally, may represent a new class of acid proteases. It digests proteins and peptides in acidic solution. The chain is Thermopsin (thpS) from Sulfolobus acidocaldarius (strain ATCC 33909 / DSM 639 / JCM 8929 / NBRC 15157 / NCIMB 11770).